The chain runs to 158 residues: MFSANIARKVVCSVCRASLRPTVCPVVYRGYRGDAPEPTILEIPLPPWQERAGEALDIKRKRLLYESRKRGMLENCILLSLFAKQYLNTMSESQLKQYDRLINEPSNDWDIYYWATDTQPTPEVYQGEVMDMLKEFTKNRDMEQRLDAPNLEYLDKSS.

The transit peptide at 1 to 17 directs the protein to the mitochondrion; it reads MFSANIARKVVCSVCRA.

This sequence belongs to the SDHAF2 family. In terms of assembly, interacts with sdha within the SDH catalytic dimer.

It is found in the mitochondrion matrix. Functionally, plays an essential role in the assembly of succinate dehydrogenase (SDH), an enzyme complex (also referred to as respiratory complex II) that is a component of both the tricarboxylic acid (TCA) cycle and the mitochondrial electron transport chain, and which couples the oxidation of succinate to fumarate with the reduction of ubiquinone (coenzyme Q) to ubiquinol. Required for flavinylation (covalent attachment of FAD) of the flavoprotein subunit sdha of the SDH catalytic dimer. This chain is Succinate dehydrogenase assembly factor 2, mitochondrial, found in Danio rerio (Zebrafish).